The sequence spans 245 residues: Probable phosphatase YcdX (245 aa).

Residues His-7, His-9, His-15, His-40, Glu-73, His-101, His-131, Asp-192, and His-194 each contribute to the Zn(2+) site.

This sequence belongs to the PHP family. Homotrimer. Zn(2+) is required as a cofactor.

This Salmonella agona (strain SL483) protein is Probable phosphatase YcdX.